A 1008-amino-acid polypeptide reads, in one-letter code: Probable transport protein MmpL10 (1008 aa).

12 consecutive transmembrane segments (helical) span residues 23–43, 202–222, 225–245, 257–277, 301–321, 340–360, 389–409, 835–855, 862–882, 895–915, 940–960, and 961–981; these read WPWV…MTVP, IELV…RNPI, LLPL…VSGV, MIVL…VFLI, ALIS…ITFL, IGIA…LVLA, VAYL…ASLV, DLQL…MALL, IYLV…CVLV, VPGL…MLLA, VITA…LSSI, and ATVV…TFIV.

This sequence belongs to the resistance-nodulation-cell division (RND) (TC 2.A.6) family. MmpL subfamily.

It is found in the cell membrane. The polypeptide is Probable transport protein MmpL10 (mmpL10) (Mycobacterium leprae (strain TN)).